A 475-amino-acid chain; its full sequence is Bifunctional protein HldE (475 aa).

The interval 1-317 is ribokinase; it reads MQYSAQFNRA…ENAIHGRTTA (317 aa). An ATP-binding site is contributed by 194–197; the sequence is NMSE. Aspartate 263 is an active-site residue. Residues 343 to 475 form a cytidylyltransferase region; sequence MTNGCFDILH…VIKKIQQLKE (133 aa).

The protein in the N-terminal section; belongs to the carbohydrate kinase PfkB family. It in the C-terminal section; belongs to the cytidylyltransferase family. As to quaternary structure, homodimer.

The catalysed reaction is D-glycero-beta-D-manno-heptose 7-phosphate + ATP = D-glycero-beta-D-manno-heptose 1,7-bisphosphate + ADP + H(+). It catalyses the reaction D-glycero-beta-D-manno-heptose 1-phosphate + ATP + H(+) = ADP-D-glycero-beta-D-manno-heptose + diphosphate. It functions in the pathway nucleotide-sugar biosynthesis; ADP-L-glycero-beta-D-manno-heptose biosynthesis; ADP-L-glycero-beta-D-manno-heptose from D-glycero-beta-D-manno-heptose 7-phosphate: step 1/4. Its pathway is nucleotide-sugar biosynthesis; ADP-L-glycero-beta-D-manno-heptose biosynthesis; ADP-L-glycero-beta-D-manno-heptose from D-glycero-beta-D-manno-heptose 7-phosphate: step 3/4. Its function is as follows. Catalyzes the phosphorylation of D-glycero-D-manno-heptose 7-phosphate at the C-1 position to selectively form D-glycero-beta-D-manno-heptose-1,7-bisphosphate. Catalyzes the ADP transfer from ATP to D-glycero-beta-D-manno-heptose 1-phosphate, yielding ADP-D-glycero-beta-D-manno-heptose. The sequence is that of Bifunctional protein HldE from Histophilus somni (strain 129Pt) (Haemophilus somnus).